A 718-amino-acid chain; its full sequence is Homeobox-leucine zipper protein HDG9 (718 aa).

Basic and acidic residues predominate over residues 1 to 12; sequence MDFTRDDNSSDE. A disordered region spans residues 1-35; that stretch reads MDFTRDDNSSDERENDVDANTNNRHEKKGYHRHTN. Positions 26–85 form a DNA-binding region, homeobox; sequence EKKGYHRHTNEQIHRLETYFKECPHPDEFQRRLLGEELNLKPKQIKFWFQNKRTQAKSHN. The stretch at 78 to 152 forms a coiled coil; the sequence is RTQAKSHNEK…LKDEYERVSN (75 aa). A disordered region spans residues 169–209; it reads PYLHGPSNHASTSKNRPALYGTSSNRLPEPSSIFRGPYTRG. Residues 176 to 194 are compositionally biased toward polar residues; that stretch reads NHASTSKNRPALYGTSSNR. The START domain occupies 232-464; that stretch reads SQLEKIAMLE…LERTCERLIF (233 aa).

This sequence belongs to the HD-ZIP homeobox family. Class IV subfamily. In terms of tissue distribution, expressed in anthers with highest levels in the tapetum and pollen grains, and chalazal end of the embryo sac.

The protein resides in the nucleus. In terms of biological role, probable transcription factor that binds to the DNA sequence 5'-GCATTAAATGCGCA-3'. The sequence is that of Homeobox-leucine zipper protein HDG9 (HDG9) from Arabidopsis thaliana (Mouse-ear cress).